We begin with the raw amino-acid sequence, 780 residues long: Ral guanine nucleotide dissociation stimulator-like 2 (780 aa).

Positions 1 to 92 (MLPRPLRLLW…PTPPPRSSRR (92 aa)) are disordered. At serine 13 the chain carries Phosphoserine. Residues 31-42 (GGGPGGRGVGGG) are compositionally biased toward gly residues. Positions 43 to 65 (QEEEEEEEEDEAPVSVWDEEEDG) are enriched in acidic residues. The N-terminal Ras-GEF domain maps to 89-213 (SSRRLRAGTL…GSADLIRNLR (125 aa)). The Ras-GEF domain maps to 244-516 (LADHLAEQLT…HRVSCEVEPP (273 aa)). Over residues 596-613 (HSLADPSHLSPPASSPRP) the composition is skewed to low complexity. Disordered regions lie at residues 596–651 (HSLA…GASD) and 741–769 (TATL…PRIK). The Ras-associating domain occupies 651 to 738 (DCRIIRVQME…HDFLLRQRRR (88 aa)). Residues 741–758 (TATLGLTSSPSASGTPPS) are compositionally biased toward low complexity.

In terms of assembly, interacts with SAMD9.

Functionally, probable guanine nucleotide exchange factor. Putative effector of Ras and/or Rap. Associates with the GTP-bound form of Rap 1A and H-Ras in vitro. The chain is Ral guanine nucleotide dissociation stimulator-like 2 (RGL2) from Canis lupus familiaris (Dog).